The chain runs to 369 residues: Chorismate synthase (369 aa).

NADP(+) is bound by residues R48 and R54. Residues 125-127 (RSS), 238-239 (NA), G278, 293-297 (KPTSS), and R319 each bind FMN.

This sequence belongs to the chorismate synthase family. In terms of assembly, homotetramer. FMNH2 is required as a cofactor.

It catalyses the reaction 5-O-(1-carboxyvinyl)-3-phosphoshikimate = chorismate + phosphate. It functions in the pathway metabolic intermediate biosynthesis; chorismate biosynthesis; chorismate from D-erythrose 4-phosphate and phosphoenolpyruvate: step 7/7. Its function is as follows. Catalyzes the anti-1,4-elimination of the C-3 phosphate and the C-6 proR hydrogen from 5-enolpyruvylshikimate-3-phosphate (EPSP) to yield chorismate, which is the branch point compound that serves as the starting substrate for the three terminal pathways of aromatic amino acid biosynthesis. This reaction introduces a second double bond into the aromatic ring system. In Burkholderia pseudomallei (strain 1106a), this protein is Chorismate synthase.